A 115-amino-acid chain; its full sequence is UPF0102 protein NMA0341 (115 aa).

It belongs to the UPF0102 family.

In Neisseria meningitidis serogroup A / serotype 4A (strain DSM 15465 / Z2491), this protein is UPF0102 protein NMA0341.